A 299-amino-acid polypeptide reads, in one-letter code: Protease HtpX homolog (299 aa).

2 helical membrane passes run 14 to 34 (ILVM…VGYL) and 39 to 59 (ATGG…IMVG). H144 contacts Zn(2+). The active site involves E145. H148 serves as a coordination point for Zn(2+). The next 2 helical transmembrane spans lie at 159 to 179 (IALA…NFMW) and 196 to 216 (VFAI…ATMV). E225 provides a ligand contact to Zn(2+).

Belongs to the peptidase M48B family. The cofactor is Zn(2+).

Its subcellular location is the cell membrane. This is Protease HtpX homolog from Limosilactobacillus fermentum (strain NBRC 3956 / LMG 18251) (Lactobacillus fermentum).